The primary structure comprises 148 residues: Calmodulin (148 aa).

Alanine 2 bears the N-acetylalanine mark. EF-hand domains follow at residues 8–43 (DQISEFKEAFSLFDKDGDGCITTKELGTVMRSLGQN), 44–79 (PTEAELQDMINEVDRDGNGTIDFPEFLNLMARKMKD), 81–116 (DSEEELKEAFRVFDKDQNGFISAAELRHVMTNLGEK), and 116–148 (KLTDEVDEMIREADVDGDGQINYEEFVKVMMAK). Ca(2+) is bound by residues aspartate 21, aspartate 23, aspartate 25, cysteine 27, glutamate 32, aspartate 57, aspartate 59, asparagine 61, threonine 63, glutamate 68, aspartate 94, aspartate 96, asparagine 98, and glutamate 105. Lysine 116 is subject to N6,N6,N6-trimethyllysine. Residues aspartate 129, aspartate 131, aspartate 133, glutamine 135, and glutamate 140 each contribute to the Ca(2+) site.

This sequence belongs to the calmodulin family.

In terms of biological role, calmodulin mediates the control of a large number of enzymes, ion channels and other proteins by Ca(2+). Among the enzymes to be stimulated by the calmodulin-Ca(2+) complex are a number of protein kinases and phosphatases. In Fagus sylvatica (Beechnut), this protein is Calmodulin (CAMF1).